A 41-amino-acid polypeptide reads, in one-letter code: Mu-conotoxin pn4c (41 aa).

A propeptide spanning residues 1–24 (DQPAERMQDDISSEHHPFFDPVKR) is cleaved from the precursor.

This sequence belongs to the conotoxin M superfamily. In terms of processing, contains 3 disulfide bonds. They are not added, since framework IV presents two different connectivities (I-V, II-III, IV-VI and I-III, II-V, IV-VI). As to expression, expressed by the venom duct.

The protein resides in the secreted. Mu-conotoxins block voltage-gated sodium channels (Nav). Blocks reversibly sodium channels in molluskan neurons, but has no effect on sodium currents in bovine chromaffin cells or in rat brain synaptosomes. Induces paralysis in mollusks (C.retripictus). The sequence is that of Mu-conotoxin pn4c from Conus pennaceus (Feathered cone).